Consider the following 102-residue polypeptide: Small ribosomal subunit protein uS10 (102 aa).

Belongs to the universal ribosomal protein uS10 family. As to quaternary structure, part of the 30S ribosomal subunit.

Functionally, involved in the binding of tRNA to the ribosomes. This is Small ribosomal subunit protein uS10 from Staphylococcus saprophyticus subsp. saprophyticus (strain ATCC 15305 / DSM 20229 / NCIMB 8711 / NCTC 7292 / S-41).